Here is a 504-residue protein sequence, read N- to C-terminus: MPATSMEELVSLCKRRGFIFQGSEIYGGLQGFWDYGPLGVELKNNIKASWWRANVYERDDMEGLDAAIIMHRLVLRHSGHEATFSDPMVDNRKTKKRYRLDHLVKDQKPDVVAQVAEGIGESVENFAAVVAALVAHPAKAAEVLVAAGVRDPFSGEVGDWTEPRPFNMMFKTSIGPVADEDSFGYLRPETAQGIFTNFKNVVDSTSRRLPFGIAQIGKAFRNEITPRNFIFRVRELEQMEIEFFCTPGTDEAWHQHWLEARLAWWEAQGIPREKIQILDVPKEDLAHYSKRTYDLMYNYPTLGYEEIEGIANRTDFDLGSHTKAQAELGIQARVEENFDSVAKLTIPHPETNKPVVPFVIEPSAGVDRAMLAVLAEAYTKETLENGSERIVLKLKPHLAPIKVAVIPLARNREEITSVAKAIKAKLQSLGLGRVLYEDSGNIGKAYRRHDEVGTPYCVTVDFETVGKGEDPALTDTVTVRDRDTLGQERVRISELANWLQARLR.

The substrate site is built by arginine 99 and glutamate 189. ATP is bound by residues 221 to 223 (RNE), 231 to 236 (FRVREL), 306 to 307 (EI), and 365 to 368 (GVDR). 236–240 (LEQME) provides a ligand contact to substrate. 361 to 365 (EPSAG) contributes to the substrate binding site.

The protein belongs to the class-II aminoacyl-tRNA synthetase family. Homodimer.

It is found in the cytoplasm. The enzyme catalyses tRNA(Gly) + glycine + ATP = glycyl-tRNA(Gly) + AMP + diphosphate. Functionally, catalyzes the attachment of glycine to tRNA(Gly). The chain is Glycine--tRNA ligase from Deinococcus geothermalis (strain DSM 11300 / CIP 105573 / AG-3a).